The following is a 276-amino-acid chain: Protein HemX (276 aa).

The next 8 membrane-spanning stretches (helical) occupy residues 9-29 (LNEG…IDFL), 40-60 (FWLL…FMWV), 66-86 (VLNV…LSLV), 93-113 (VDFI…IHTF), 132-152 (LVIH…SFVF), 187-207 (VLNV…VIWA), 217-237 (FDAK…YLYI), and 247-267 (VAAL…FLLG).

The protein to M.leprae U1620K.

The protein localises to the cell membrane. Its function is as follows. Required for HemL synthesis. In Bacillus subtilis (strain 168), this protein is Protein HemX (hemX).